The sequence spans 283 residues: Probable voltage-dependent anion-selective channel (283 aa).

The protein belongs to the eukaryotic mitochondrial porin family.

It is found in the mitochondrion outer membrane. Forms a channel through the cell membrane that allows diffusion of small hydrophilic molecules. Plays a role in maintaining mitochondrial morphology. This chain is Probable voltage-dependent anion-selective channel, found in Caenorhabditis elegans.